The sequence spans 725 residues: Ribonucleoside-diphosphate reductase subunit alpha (725 aa).

Substrate-binding positions include T172, 188 to 189 (SC), G217, 397 to 401 (NLCSE), and 599 to 603 (PTGSI). The cysteines at positions 189 and 426 are disulfide-linked. Residue N397 is the Proton acceptor of the active site. C399 serves as the catalytic Cysteine radical intermediate. E401 (proton acceptor) is an active-site residue.

This sequence belongs to the ribonucleoside diphosphate reductase large chain family. As to quaternary structure, tetramer of two alpha and two beta subunits. Co-immunoprecipitates with DarG in the presence and absence of darT.

The catalysed reaction is a 2'-deoxyribonucleoside 5'-diphosphate + [thioredoxin]-disulfide + H2O = a ribonucleoside 5'-diphosphate + [thioredoxin]-dithiol. Its activity is regulated as follows. Under complex allosteric control mediated by deoxynucleoside triphosphates and ATP binding. The type of nucleotide bound at the specificity site determines substrate preference. It seems probable that ATP makes the enzyme reduce CDP and UDP, dGTP favors ADP reduction and dTTP favors GDP reduction. CDP reduction is stimulated by dATP. Functionally, provides the precursors necessary for DNA synthesis. Catalyzes the biosynthesis of deoxyribonucleotides from the corresponding ribonucleotides. When coexpressed in E.coli with nrdF2 the 2 proteins complement a temperature-sensitive E.coli mutant, however coexpression with nrdF1 does not complement. In Mycobacterium tuberculosis (strain ATCC 25618 / H37Rv), this protein is Ribonucleoside-diphosphate reductase subunit alpha (nrdE).